Here is a 356-residue protein sequence, read N- to C-terminus: sn-glycerol-3-phosphate import ATP-binding protein UgpC (356 aa).

The region spanning 4-235 (LKLQAVTKSW…PASLFVASFI (232 aa)) is the ABC transporter domain. 37–44 (GPSGCGKS) is an ATP binding site.

The protein belongs to the ABC transporter superfamily. sn-glycerol-3-phosphate importer (TC 3.A.1.1.3) family. In terms of assembly, the complex is composed of two ATP-binding proteins (UgpC), two transmembrane proteins (UgpA and UgpE) and a solute-binding protein (UgpB).

It is found in the cell inner membrane. The enzyme catalyses sn-glycerol 3-phosphate(out) + ATP + H2O = sn-glycerol 3-phosphate(in) + ADP + phosphate + H(+). Functionally, part of the ABC transporter complex UgpBAEC involved in sn-glycerol-3-phosphate (G3P) import. Responsible for energy coupling to the transport system. The sequence is that of sn-glycerol-3-phosphate import ATP-binding protein UgpC from Shigella sonnei (strain Ss046).